A 1180-amino-acid chain; its full sequence is Pesticidal crystal protein Cry4Aa (1180 aa).

It belongs to the delta endotoxin family.

Functionally, promotes colloidosmotic lysis by binding to the midgut epithelial cells of insects. The polypeptide is Pesticidal crystal protein Cry4Aa (cry4Aa) (Bacillus thuringiensis subsp. israelensis).